A 419-amino-acid chain; its full sequence is UPF0229 protein Tbd_1233 (419 aa).

A disordered region spans residues 85-108 (GDRIDRPAGEGGGGSGGSPDGEGM). Residues 93–104 (GEGGGGSGGSPD) show a composition bias toward gly residues.

It belongs to the UPF0229 family.

The sequence is that of UPF0229 protein Tbd_1233 from Thiobacillus denitrificans (strain ATCC 25259 / T1).